The primary structure comprises 485 residues: Rhamnulokinase (485 aa).

11–15 (ASSGR) serves as a coordination point for ATP. Substrate-binding positions include A79 and 234–236 (HDT). The Proton acceptor role is filled by D235. T257 contacts ATP. Residue N294 participates in substrate binding. ATP is bound by residues Q302 and G401.

This sequence belongs to the rhamnulokinase family. Mg(2+) is required as a cofactor.

The enzyme catalyses L-rhamnulose + ATP = L-rhamnulose 1-phosphate + ADP + H(+). The protein operates within carbohydrate degradation; L-rhamnose degradation; glycerone phosphate from L-rhamnose: step 2/3. Involved in the catabolism of L-rhamnose (6-deoxy-L-mannose). Catalyzes the transfer of the gamma-phosphate group from ATP to the 1-hydroxyl group of L-rhamnulose to yield L-rhamnulose 1-phosphate. This Ligilactobacillus salivarius (strain UCC118) (Lactobacillus salivarius) protein is Rhamnulokinase.